Reading from the N-terminus, the 212-residue chain is NADH dehydrogenase [ubiquinone] iron-sulfur protein 8, mitochondrial (212 aa).

The N-terminal 36 residues, 1–36 (MRCLTMPMLLRALAQAQAARAGHASVRGLHSSAVAA), are a transit peptide targeting the mitochondrion. 4Fe-4S ferredoxin-type domains follow at residues 104–133 (RRYP…IEAE) and 143–172 (TRYD…EGPN). C113, C116, C119, C123, C152, C155, C158, and C162 together coordinate [4Fe-4S] cluster.

The protein belongs to the complex I 23 kDa subunit family. In terms of assembly, core subunit of respiratory chain NADH dehydrogenase (Complex I) which is composed of 45 different subunits. This is a component of the iron-sulfur (IP) fragment of the enzyme. Interacts with RAB5IF. The cofactor is [4Fe-4S] cluster.

The protein resides in the mitochondrion inner membrane. The enzyme catalyses a ubiquinone + NADH + 5 H(+)(in) = a ubiquinol + NAD(+) + 4 H(+)(out). In terms of biological role, core subunit of the mitochondrial membrane respiratory chain NADH dehydrogenase (Complex I) which catalyzes electron transfer from NADH through the respiratory chain, using ubiquinone as an electron acceptor. Essential for the catalytic activity and assembly of complex I. This chain is NADH dehydrogenase [ubiquinone] iron-sulfur protein 8, mitochondrial (NDUFS8), found in Bos taurus (Bovine).